Reading from the N-terminus, the 205-residue chain is Large ribosomal subunit protein uL3 (205 aa).

It belongs to the universal ribosomal protein uL3 family. Part of the 50S ribosomal subunit. Forms a cluster with proteins L14 and L19.

One of the primary rRNA binding proteins, it binds directly near the 3'-end of the 23S rRNA, where it nucleates assembly of the 50S subunit. In Flavobacterium johnsoniae (strain ATCC 17061 / DSM 2064 / JCM 8514 / BCRC 14874 / CCUG 350202 / NBRC 14942 / NCIMB 11054 / UW101) (Cytophaga johnsonae), this protein is Large ribosomal subunit protein uL3.